Here is a 318-residue protein sequence, read N- to C-terminus: Aspartate carbamoyltransferase catalytic subunit (318 aa).

Residues Arg-54 and Thr-55 each contribute to the carbamoyl phosphate site. Lys-82 is an L-aspartate binding site. The carbamoyl phosphate site is built by Arg-104, His-134, and Gln-137. Residues Arg-174 and Arg-230 each coordinate L-aspartate. Residues Gly-271 and Pro-272 each contribute to the carbamoyl phosphate site.

This sequence belongs to the aspartate/ornithine carbamoyltransferase superfamily. ATCase family. In terms of assembly, heterododecamer (2C3:3R2) of six catalytic PyrB chains organized as two trimers (C3), and six regulatory PyrI chains organized as three dimers (R2).

It catalyses the reaction carbamoyl phosphate + L-aspartate = N-carbamoyl-L-aspartate + phosphate + H(+). Its pathway is pyrimidine metabolism; UMP biosynthesis via de novo pathway; (S)-dihydroorotate from bicarbonate: step 2/3. Catalyzes the condensation of carbamoyl phosphate and aspartate to form carbamoyl aspartate and inorganic phosphate, the committed step in the de novo pyrimidine nucleotide biosynthesis pathway. The chain is Aspartate carbamoyltransferase catalytic subunit from Clavibacter michiganensis subsp. michiganensis (strain NCPPB 382).